Reading from the N-terminus, the 425-residue chain is Histidine--tRNA ligase (425 aa).

Belongs to the class-II aminoacyl-tRNA synthetase family. As to quaternary structure, homodimer.

It localises to the cytoplasm. It carries out the reaction tRNA(His) + L-histidine + ATP = L-histidyl-tRNA(His) + AMP + diphosphate + H(+). In Erwinia tasmaniensis (strain DSM 17950 / CFBP 7177 / CIP 109463 / NCPPB 4357 / Et1/99), this protein is Histidine--tRNA ligase.